Reading from the N-terminus, the 197-residue chain is Thymidylate kinase (197 aa).

7 to 14 (GIDGSGKS) is a binding site for ATP.

The protein belongs to the thymidylate kinase family.

It carries out the reaction dTMP + ATP = dTDP + ADP. In terms of biological role, phosphorylation of dTMP to form dTDP in both de novo and salvage pathways of dTTP synthesis. The sequence is that of Thymidylate kinase from Thermotoga sp. (strain RQ2).